Consider the following 374-residue polypeptide: Mitochondrial inner membrane protein oxa1-1 (374 aa).

The chain crosses the membrane as a helical span at residues 77 to 97; the sequence is TINVYAGAPWWVSIILTTLGV. The Mitochondrial intermembrane portion of the chain corresponds to 98 to 159; that stretch reads RLALTPVMIA…GIYLKHNVNP (62 aa). A helical transmembrane segment spans residues 160-180; the sequence is FAIFILPLTQSAVFFSFFYAI. Residues 181-242 are Mitochondrial matrix-facing; it reads RKMSRLSVDG…TIGNSTNWRT (62 aa). The chain crosses the membrane as a helical span at residues 243–263; that stretch reads FFFLCCLLSPLLTAKLPAAIF. Residues 264-374 lie on the Mitochondrial intermembrane side of the membrane; that stretch reads MYWIPSSLFN…SKKNSKKQSN (111 aa).

This sequence belongs to the OXA1/ALB3/YidC family.

It is found in the mitochondrion inner membrane. Its function is as follows. Required for the insertion of integral membrane proteins into the mitochondrial inner membrane. Essential for the activity and assembly of cytochrome c oxidase. Not essential for viability, while oxa102 is essential. When both genes are deleted the cell is non-viable, suggesting that oxa101 act as a back-up for oxa102. In Schizosaccharomyces pombe (strain 972 / ATCC 24843) (Fission yeast), this protein is Mitochondrial inner membrane protein oxa1-1 (oxa101).